Consider the following 155-residue polypeptide: MTIEICKKLHVLIVEARFYDGISDALLTGAVSTLQKAEATYDIVTVPGALEIPGAIAFAEKNSKIYYDGYVALGCVIRGETYHFEIVANDSCRALMDLTIHKHLAIGNGILTVENEKQAWARAKQDEKNKGGFAAQAALCMIALKKRFGEIIKYG.

5-amino-6-(D-ribitylamino)uracil-binding positions include Phe-18, 49 to 51 (ALE), and 75 to 77 (CVI). 80–81 (ET) provides a ligand contact to (2S)-2-hydroxy-3-oxobutyl phosphate. The active-site Proton donor is His-83. Residue Asn-108 participates in 5-amino-6-(D-ribitylamino)uracil binding. Arg-122 contacts (2S)-2-hydroxy-3-oxobutyl phosphate.

It belongs to the DMRL synthase family.

The catalysed reaction is (2S)-2-hydroxy-3-oxobutyl phosphate + 5-amino-6-(D-ribitylamino)uracil = 6,7-dimethyl-8-(1-D-ribityl)lumazine + phosphate + 2 H2O + H(+). The protein operates within cofactor biosynthesis; riboflavin biosynthesis; riboflavin from 2-hydroxy-3-oxobutyl phosphate and 5-amino-6-(D-ribitylamino)uracil: step 1/2. Catalyzes the formation of 6,7-dimethyl-8-ribityllumazine by condensation of 5-amino-6-(D-ribitylamino)uracil with 3,4-dihydroxy-2-butanone 4-phosphate. This is the penultimate step in the biosynthesis of riboflavin. The chain is 6,7-dimethyl-8-ribityllumazine synthase from Bartonella henselae (strain ATCC 49882 / DSM 28221 / CCUG 30454 / Houston 1) (Rochalimaea henselae).